Consider the following 38-residue polypeptide: Large ribosomal subunit protein bL36 (38 aa).

Belongs to the bacterial ribosomal protein bL36 family.

This Porphyromonas gingivalis (strain ATCC 33277 / DSM 20709 / CIP 103683 / JCM 12257 / NCTC 11834 / 2561) protein is Large ribosomal subunit protein bL36.